The following is a 251-amino-acid chain: Adenylate kinase (251 aa).

Residue 46-51 (GAGKGT) participates in ATP binding. The segment at 66–95 (ATGDMLRSQVQQQTPLGVEAKKIMDAGGLV) is NMP. AMP-binding positions include threonine 67, arginine 72, 93–95 (GLV), 122–125 (GFPR), and glutamine 129. An LID region spans residues 163–200 (GRLVHPASGRSYHKVFNPPKKEMIDDITGEALVQRSDD). ATP-binding positions include arginine 164 and 173 to 174 (SY). Residues arginine 197 and arginine 208 each contribute to the AMP site. Position 236 (glutamine 236) interacts with ATP.

Belongs to the adenylate kinase family. AK2 subfamily. As to quaternary structure, monomer.

The protein localises to the cytoplasm. It localises to the cytosol. It is found in the mitochondrion intermembrane space. The enzyme catalyses AMP + ATP = 2 ADP. Catalyzes the reversible transfer of the terminal phosphate group between ATP and AMP. Plays an important role in cellular energy homeostasis and in adenine nucleotide metabolism. Adenylate kinase activity is critical for regulation of the phosphate utilization and the AMP de novo biosynthesis pathways. This Yarrowia lipolytica (strain CLIB 122 / E 150) (Yeast) protein is Adenylate kinase.